The primary structure comprises 476 residues: Membrane-bound lytic murein transglycosylase F (476 aa).

The signal sequence occupies residues 1-22 (MTRFLFALILGFLLTACQQVTV). The segment at 23–257 (DETEFVPKKL…HLNEKYFGHV (235 aa)) is non-LT domain. The LT domain stretch occupies residues 258 to 476 (KRFDYVDTRA…AGTLSPEQPK (219 aa)). E302 is a catalytic residue. A disordered region spans residues 446–476 (SKQQNPEEEPSDLASEEPAIPAGTLSPEQPK). The span at 451 to 460 (PEEEPSDLAS) shows a compositional bias: acidic residues.

It in the N-terminal section; belongs to the bacterial solute-binding protein 3 family. In the C-terminal section; belongs to the transglycosylase Slt family.

Its subcellular location is the cell outer membrane. It catalyses the reaction Exolytic cleavage of the (1-&gt;4)-beta-glycosidic linkage between N-acetylmuramic acid (MurNAc) and N-acetylglucosamine (GlcNAc) residues in peptidoglycan, from either the reducing or the non-reducing ends of the peptidoglycan chains, with concomitant formation of a 1,6-anhydrobond in the MurNAc residue.. Functionally, murein-degrading enzyme that degrades murein glycan strands and insoluble, high-molecular weight murein sacculi, with the concomitant formation of a 1,6-anhydromuramoyl product. Lytic transglycosylases (LTs) play an integral role in the metabolism of the peptidoglycan (PG) sacculus. Their lytic action creates space within the PG sacculus to allow for its expansion as well as for the insertion of various structures such as secretion systems and flagella. The sequence is that of Membrane-bound lytic murein transglycosylase F from Shewanella baltica (strain OS155 / ATCC BAA-1091).